We begin with the raw amino-acid sequence, 126 residues long: Small ribosomal subunit protein uS13 (126 aa).

A disordered region spans residues 98 to 126 (PVRGQSTKNNARTRKGRKKTVANKKKATK). Residues 108–126 (ARTRKGRKKTVANKKKATK) are compositionally biased toward basic residues.

It belongs to the universal ribosomal protein uS13 family. As to quaternary structure, part of the 30S ribosomal subunit. Forms a loose heterodimer with protein S19. Forms two bridges to the 50S subunit in the 70S ribosome.

Functionally, located at the top of the head of the 30S subunit, it contacts several helices of the 16S rRNA. In the 70S ribosome it contacts the 23S rRNA (bridge B1a) and protein L5 of the 50S subunit (bridge B1b), connecting the 2 subunits; these bridges are implicated in subunit movement. Contacts the tRNAs in the A and P-sites. This Bacteroides fragilis (strain ATCC 25285 / DSM 2151 / CCUG 4856 / JCM 11019 / LMG 10263 / NCTC 9343 / Onslow / VPI 2553 / EN-2) protein is Small ribosomal subunit protein uS13.